Here is a 566-residue protein sequence, read N- to C-terminus: Beta,beta-carotene 15,15'-dioxygenase (566 aa).

The Fe cation site is built by histidine 172, histidine 237, histidine 308, and histidine 514. The segment at threonine 529–leucine 566 is disordered.

Belongs to the carotenoid oxygenase family. The cofactor is Fe(2+).

The protein localises to the cytoplasm. Its subcellular location is the cytosol. The enzyme catalyses all-trans-beta-carotene + O2 = 2 all-trans-retinal. The protein operates within cofactor metabolism; retinol metabolism. Symmetrically cleaves beta-carotene into two molecules of retinal using a dioxygenase mechanism. The protein is Beta,beta-carotene 15,15'-dioxygenase of Rattus norvegicus (Rat).